Reading from the N-terminus, the 257-residue chain is MKTPHKKGAAKEQMGEGVGHHIGSTTIKKKKASQKRQRSRSSSRRSIVGCRISHGWKEGDEPITQWKGTVLDQVPINPSLYLVKYDGIDCVYGLELHRDERILKLKILPDKVSFSGVSDVRLANTIIGKAVEHMFEGEHGSKDEWRGMVLAQAPIMNAWFYITYERDPVLYMYQLLDDYKEGDLRIMPESSASPPADREPEGVVDGLIGKHVEYTKEDGSKRTGKVIHQVKAKPSVYFIKFDDDFHIYVYDLVKKNS.

The tract at residues 1-47 (MKTPHKKGAAKEQMGEGVGHHIGSTTIKKKKASQKRQRSRSSSRRSI) is disordered. The segment covering 27-43 (IKKKKASQKRQRSRSSS) has biased composition (basic residues). 3 tudor-like domain regions span residues 48 to 97 (VGCR…LELH), 127 to 176 (IGKA…YQLL), and 208 to 253 (IGKH…YDLV). Histone H3K4me3 and H3R8me2a binding stretches follow at residues Glu136 and 244-246 (DFH).

This sequence belongs to the SPIN/STSY family. Interacts with C11orf84/SPINDOC.

The protein localises to the nucleus. Its function is as follows. May be involved in the regulation of cell cycle progression. Exhibits H3K4me3-binding activity. The polypeptide is Spindlin-2C (Spin2c) (Mus musculus (Mouse)).